A 502-amino-acid chain; its full sequence is Lysine--tRNA ligase (502 aa).

Residues E413 and E420 each coordinate Mg(2+).

This sequence belongs to the class-II aminoacyl-tRNA synthetase family. As to quaternary structure, homodimer. It depends on Mg(2+) as a cofactor.

Its subcellular location is the cytoplasm. It catalyses the reaction tRNA(Lys) + L-lysine + ATP = L-lysyl-tRNA(Lys) + AMP + diphosphate. The sequence is that of Lysine--tRNA ligase from Aromatoleum aromaticum (strain DSM 19018 / LMG 30748 / EbN1) (Azoarcus sp. (strain EbN1)).